Here is a 639-residue protein sequence, read N- to C-terminus: Splicing factor 1 (639 aa).

Disordered regions lie at residues 1 to 42 and 65 to 94; these read MATG…VIPP and LRTG…GKRL. A2 carries the post-translational modification N-acetylalanine. S14 is modified (phosphoserine). A Nuclear localization signal motif is present at residues 15-19; the sequence is KKRKR. A Phosphoserine; by PKG modification is found at S20. S80 and S82 each carry phosphoserine. Y87 is modified (phosphotyrosine). S89 bears the Phosphoserine mark. The region spanning 141 to 222 is the KH domain; it reads MIPQDEYPEI…ENVKKAVEQI (82 aa). The CCHC-type zinc-finger motif lies at 277-296; it reads TVCTKCGGAGHIASDCKFQR. The interval 325–639 is disordered; the sequence is VPASVGSTSG…PAPPPPPPQN (315 aa). The segment covering 335-350 has biased composition (low complexity); the sequence is PATTPLASAPRPAAPA. Positions 382-394 are enriched in gly residues; sequence MHGGGPGGPGGGP. Positions 418-447 are enriched in pro residues; the sequence is NGPPPPWMQPPPPPMNQGPHPPGHHGPPPM. Position 463 is a phosphoserine (L463). K467 carries the omega-N-methylarginine modification. Residues 470–499 show a composition bias toward pro residues; that stretch reads MPPPPMGMMPPPPPPPSGQPPPPPSGPLPP. Low complexity-rich tracts occupy residues 515-534 and 542-566; these read SSMA…TTTT and PPWQ…NPTM. Pro residues-rich tracts occupy residues 567–591 and 598–608; these read VPLP…PPPG and APPPPPPPPMD. Over residues 615–625 the composition is skewed to low complexity; it reads MMGMGVAGMPP. The segment covering 626-639 has biased composition (pro residues); sequence FGMPPAPPPPPPQN.

This sequence belongs to the BBP/SF1 family. In terms of assembly, binds U2AF2. Interacts with U1 snRNA. Binds EWSR1, FUS and TAF15. Interacts with RBM17. Phosphorylation on Ser-20 interferes with U2AF2 binding and spliceosome assembly. Isoform 6 is phosphorylated on Ser-463. In terms of tissue distribution, detected in lung, ovary, adrenal gland, colon, kidney, muscle, pancreas, thyroid, placenta, brain, liver and heart.

The protein localises to the nucleus. In terms of biological role, necessary for the ATP-dependent first step of spliceosome assembly. Binds to the intron branch point sequence (BPS) 5'-UACUAAC-3' of the pre-mRNA. May act as transcription repressor. The polypeptide is Splicing factor 1 (SF1) (Homo sapiens (Human)).